The following is a 500-amino-acid chain: Probable cytosol aminopeptidase (500 aa).

Mn(2+)-binding residues include Lys-262 and Asp-267. Residue Lys-274 is part of the active site. Asp-285, Asp-344, and Glu-346 together coordinate Mn(2+). Residue Arg-348 is part of the active site.

It belongs to the peptidase M17 family. The cofactor is Mn(2+).

Its subcellular location is the cytoplasm. It carries out the reaction Release of an N-terminal amino acid, Xaa-|-Yaa-, in which Xaa is preferably Leu, but may be other amino acids including Pro although not Arg or Lys, and Yaa may be Pro. Amino acid amides and methyl esters are also readily hydrolyzed, but rates on arylamides are exceedingly low.. It catalyses the reaction Release of an N-terminal amino acid, preferentially leucine, but not glutamic or aspartic acids.. Functionally, presumably involved in the processing and regular turnover of intracellular proteins. Catalyzes the removal of unsubstituted N-terminal amino acids from various peptides. This chain is Probable cytosol aminopeptidase, found in Ehrlichia ruminantium (strain Welgevonden).